The primary structure comprises 351 residues: Photosystem II D2 protein (351 aa).

Residues 39-59 (CAYLALGAWFTGTTFVSSWYT) traverse the membrane as a helical segment. H116 contributes to the chlorophyll a binding site. Residues 123–139 (GFCLRQFEIARLVGLRP) form a helical membrane-spanning segment. Pheophytin a-binding residues include Q128 and N141. The helical transmembrane segment at 151 to 164 (VFVSVFLLYPLGQA) threads the bilayer. Chlorophyll a is bound at residue H196. Residues 206–226 (GALLCAIHGATVENTLFEDGE) traverse the membrane as a helical segment. Residues H213 and F260 each contribute to the a plastoquinone site. H213 contributes to the Fe cation binding site. H267 serves as a coordination point for Fe cation. A helical membrane pass occupies residues 277 to 293 (GLWVSSIGIVGLALNLR).

The protein belongs to the reaction center PufL/M/PsbA/D family. In terms of assembly, PSII is composed of 1 copy each of membrane proteins PsbA, PsbB, PsbC, PsbD, PsbE, PsbF, PsbH, PsbI, PsbJ, PsbK, PsbL, PsbM, PsbT, PsbY, PsbZ, Psb30/Ycf12, at least 3 peripheral proteins of the oxygen-evolving complex and a large number of cofactors. It forms dimeric complexes. Requires The D1/D2 heterodimer binds P680, chlorophylls that are the primary electron donor of PSII, and subsequent electron acceptors. It shares a non-heme iron and each subunit binds pheophytin, quinone, additional chlorophylls, carotenoids and lipids. There is also a Cl(-1) ion associated with D1 and D2, which is required for oxygen evolution. The PSII complex binds additional chlorophylls, carotenoids and specific lipids. as cofactor.

It is found in the plastid. Its subcellular location is the chloroplast thylakoid membrane. The enzyme catalyses 2 a plastoquinone + 4 hnu + 2 H2O = 2 a plastoquinol + O2. Its function is as follows. Photosystem II (PSII) is a light-driven water:plastoquinone oxidoreductase that uses light energy to abstract electrons from H(2)O, generating O(2) and a proton gradient subsequently used for ATP formation. It consists of a core antenna complex that captures photons, and an electron transfer chain that converts photonic excitation into a charge separation. The D1/D2 (PsbA/PsbD) reaction center heterodimer binds P680, the primary electron donor of PSII as well as several subsequent electron acceptors. D2 is needed for assembly of a stable PSII complex. The protein is Photosystem II D2 protein of Cyanidium caldarium (Red alga).